A 587-amino-acid polypeptide reads, in one-letter code: DELLA protein RGA (587 aa).

Residues 1–26 (MKRDHHQFQGRLSNHGTSSSSSSISK) are disordered. A DELLA motif motif is present at residues 44–48 (DELLA). Residues 66–70 (LEQLE) carry the LEXLE motif motif. The VHYNP motif signature appears at 89 to 93 (VHYNP). Residues 152–181 (IDSSSSSNNQNKRLKSCSSPDSMVTSTSTG) are disordered. The segment covering 153–175 (DSSSSSNNQNKRLKSCSSPDSMV) has biased composition (polar residues). Positions 212-581 (VDSQENGVRL…RPLITTSAWK (370 aa)) constitute a GRAS domain. Residues 219–273 (VRLVHALMACAEAIQQNNLTLAEALVKQIGCLAVSQAGAMRKVATYFAEALARRI) are leucine repeat I (LRI). The tract at residues 292–357 (QMHFYETCPY…GGPPTFRLTG (66 aa)) is VHIID. The short motif at 323-327 (VHVID) is the VHIID element. The interval 371–403 (EVGCKLAQLAEAIHVEFEYRGFVANSLADLDAS) is leucine repeat II (LRII). The PFYRE stretch occupies residues 415–502 (VAVNSVFELH…EVYLGKQICN (88 aa)). Positions 423-427 (LHKLL) match the LXXLL motif motif. The segment at 505 to 581 (ACEGPDRVER…RPLITTSAWK (77 aa)) is SAW.

It belongs to the GRAS family. DELLA subfamily. As to quaternary structure, interacts directly with the GID2/SLY1 component of the SCF(GID2) complex. Interacts (via N-terminus) with GID1A, GID1B and GID1B (via N-terminus). Binds to bHLH transcription factors such as MYC2, PIF1, PIF4, PIF6 and SPT. Interacts with the BOI proteins BOI, BRG1, BRG2 and BRG3. Interacts with NFYC9. Interacts with TOPP4. Interacts with FLZ5. Binds to zinc finger proteins MGP/IDD3, IDD4, IDD5, BIB/IDD9 and JKD/IDD10 in the nucleus. Binds to and coactivates GAF1/IDD2 and ENY/IDD1. Binds to PDF2 and ATML1. In terms of processing, phosphorylated. Phosphorylation may increase the interaction with GID2. Post-translationally, gibberellin (GA) induces dephosphorylation of RGA by TOPP4 and subsequent degradation by the proteasomal pathway. Ubiquitinated. Upon GA application it is ubiquitinated by the SCF(GID2) complex, leading to its subsequent degradation. In terms of processing, O-fucosylated by SPY. O-fucosylation enhances RGA activity by promoting RGA binding to key transcription factors in brassinosteroid and light signaling pathways. Ubiquitously expressed. Expressed in roots, rosette leaves, bolting and mature stems, young and mature siliques, flower buds and influorescences.

The protein resides in the nucleus. Its function is as follows. Probable transcriptional regulator that acts as a repressor of the gibberellin (GA) signaling pathway. Probably acts by participating in large multiprotein complexes that repress transcription of GA-inducible genes. Positively regulates XERICO expression in seeds. Upon GA application, it is degraded by the proteasome, allowing the GA signaling pathway. Compared to other DELLA proteins, it is the most sensitive to GA application. No effect of the BOI proteins on its stability. Its activity is probably regulated by other phytohormones such as auxin and ethylene, attenuation of auxin transport delaying its GA-induced degradation. Involved in the regulation of seed dormancy and germination, including glucose-induced delay of seed germination. The sequence is that of DELLA protein RGA from Arabidopsis thaliana (Mouse-ear cress).